Here is a 271-residue protein sequence, read N- to C-terminus: Virulence regulon transcriptional activator VirF (271 aa).

An HTH araC/xylS-type domain is found at 167–265; sequence ERLQKFMEEN…GCTPSQARLT (99 aa). 2 DNA-binding regions (H-T-H motif) span residues 184 to 205 and 232 to 255; these read SKFA…GTVY and IVDI…RRRF.

Its function is as follows. Transcriptional activator of the Yersinia virulence regulon. This Yersinia enterocolitica protein is Virulence regulon transcriptional activator VirF (virF).